A 452-amino-acid polypeptide reads, in one-letter code: Probable ECA polymerase (452 aa).

Transmembrane regions (helical) follow at residues 6 to 26 (FSGL…LTWF), 37 to 57 (VFFS…TSVL), 63 to 83 (VGVA…CFYG), 118 to 138 (VILM…NGFL), 155 to 175 (GVAL…VYFL), 181 to 201 (AWLF…MIVG), 207 to 227 (IIIA…ISLW), 228 to 248 (MLAA…LKRY), 341 to 361 (LVVM…GLII), 378 to 398 (YKAA…IVLA), and 410 to 430 (VFFL…FWLF).

It belongs to the WzyE family. In terms of assembly, probably part of a complex composed of WzxE, WzyE and WzzE.

The protein localises to the cell inner membrane. It participates in bacterial outer membrane biogenesis; enterobacterial common antigen biosynthesis. Probably involved in the polymerization of enterobacterial common antigen (ECA) trisaccharide repeat units. This Salmonella typhi protein is Probable ECA polymerase.